We begin with the raw amino-acid sequence, 433 residues long: MSFTVTKTAPALITPSEPTPSGHILPLSFFDRLPFLRVFLVDMIMVYGRGDQPAKVIKEAVAKALVHYYPLAGRLTTDTDDGELSVACTGEGVWFVEATADCRMEDVNYLQVEPLMIPKEQMLPSHPEGVDPYTLPLMIQVTQFRCGGFAFATRANHAVFDGIGAGQIKVAIGEMARGLKHPTVKPVWCRDVIRKPIPSQISATEPHDTDLSPVSDIKFTNNQTNIECCSFDLSLDHINHLKDRFAKEVGKICSVFDVITAKLWQSRTRAIGLQPQTEVSLTFLLNIRQVVLHNELPPDGGYYGNCLVPLVNKAPSGQIANAPLFEIVRLIKEAKDDLLRKDSASLIGGMPPYKKPSYADLSIVDWRRLGLYEADFGWGGPMFLVPLNEHTVTSCSTYLFKSPVASKKDVCLVTYCIVKEHLEAFRAEMNDFT.

Catalysis depends on proton acceptor residues histidine 157 and aspartate 375.

It belongs to the plant acyltransferase family. In terms of tissue distribution, expressed in young cromes.

The enzyme catalyses myricetin 3-O-[beta-D-glucosyl-(1-&gt;2)-alpha-L-rhamnoside] + (E)-caffeoyl-CoA = myricetin 3-O-[(6-O-(E)-caffeoyl-beta-D-glucosyl)-(1-&gt;2)-alpha-L-rhamnoside] + CoA. Its pathway is flavonoid metabolism. Its function is as follows. Caffeoyltransferase involved in montbretin A (MbA) biosynthesis. Catalyzes the caffeoylation of myricetin 3-O-beta-D-glucosyl 1,2-alpha-L-rhamnoside (MRG) to produce myricetin 3-O-(6'-O-caffeoyl)-beta-D-glucosyl 1,2-alpha-L-rhamnoside (mini-MbA), a precursor of MbA. Mini-MbA and MbA are potent inhibitors of human pancreatic alpha-amylase and are being developed as drug candidates to treat type-2 diabetes. In vitro, is able to catalyze the caffeoylation of quercetin 3-O-sophoroside (QGG), although QGG may not be a physiological substrate in vivo. In vitro, can use coumaryl-CoA, feruloyl-CoA and acetyl-CoA, although these three acyl donors may not be physiological in vivo. The chain is Myricetin 3-O-glucosyl 1,2-rhamnoside 6'-O-caffeoyltransferase AT1 from Crocosmia x crocosmiiflora (Montbretia).